We begin with the raw amino-acid sequence, 155 residues long: MENNRAGRPKSCRRVKEMPKVRCFKPQGIPGIKLEEMVLSVDEMESLRLADLEGLYQSEAARRMDVSRQTFGRIIDSAHRKVADAIIHGKSIVIEGGVVMKREEQVHNAKPGCVCQHCGHEESHRSGLPCRDMICPECGHHMIRKGGCGTGQEDI.

Belongs to the UPF0251 family.

In Prosthecochloris aestuarii (strain DSM 271 / SK 413), this protein is UPF0251 protein Paes_1249.